The chain runs to 589 residues: Protein OS-9 homolog (589 aa).

The first 21 residues, 1-21 (MFSILNKLGIIWLALANISNC), serve as a signal peptide directing secretion. N-linked (GlcNAc...) asparagine glycosylation is found at Asn17, Asn61, and Asn90. Residues 130-288 (KDCVFAYGSN…VIGVPKLCSL (159 aa)) enclose the MRH domain. A disulfide bridge links Cys132 with Cys148. Residues Trp143, Gln155, Asp241, Arg247, Glu270, and Tyr276 each contribute to the a mannooligosaccharide derivative site. Cystine bridges form between Cys240–Cys274 and Cys255–Cys286. The N-linked (GlcNAc...) asparagine glycan is linked to Asn426. The tract at residues 497 to 520 (GKGSALDSTNNDKNNKATAENDKQ) is disordered. A compositionally biased stretch (basic and acidic residues) spans 509–519 (KNNKATAENDK). The Prevents secretion from ER motif lies at 586-589 (HDEL).

This sequence belongs to the OS-9 family. As to quaternary structure, interacts with missfolded ER lumenal proteins.

It localises to the endoplasmic reticulum membrane. Its function is as follows. Lectin involved in the quality control of the secretory pathway. As a member of the endoplasmic reticulum-associated degradation lumenal (ERAD-L) surveillance system, targets misfolded endoplasmic reticulum lumenal glycoproteins for degradation. In Debaryomyces hansenii (strain ATCC 36239 / CBS 767 / BCRC 21394 / JCM 1990 / NBRC 0083 / IGC 2968) (Yeast), this protein is Protein OS-9 homolog (YOS9).